The primary structure comprises 433 residues: Homoserine dehydrogenase (433 aa).

The NADPH site is built by T13 and V14. 2 residues coordinate NAD(+): V14 and V33. NADP(+) is bound at residue V14. NADPH contacts are provided by K45 and K105. NADP(+) contacts are provided by K45 and K105. Residues E129, V132, G134, and I136 each coordinate Na(+). Residues G187 and E190 each coordinate NADP(+). L-homoserine contacts are provided by E190 and D201. Residue K205 is the Proton donor of the active site. Position 302 (G302) interacts with NADPH. Position 302 (G302) interacts with NAD(+). Position 302 (G302) interacts with NADP(+). The ACT domain occupies F350–R426.

It belongs to the homoserine dehydrogenase family. In terms of assembly, homotetramer. A metal cation is required as a cofactor.

Its subcellular location is the cytoplasm. It localises to the secreted. The catalysed reaction is L-homoserine + NADP(+) = L-aspartate 4-semialdehyde + NADPH + H(+). Its pathway is amino-acid biosynthesis; L-methionine biosynthesis via de novo pathway; L-homoserine from L-aspartate: step 3/3. It participates in amino-acid biosynthesis; L-threonine biosynthesis; L-threonine from L-aspartate: step 3/5. With respect to regulation, feedback inhibition by threonine. Activated by sodium ions. Functionally, catalyzes the conversion of L-aspartate-beta-semialdehyde (L-Asa) to L-homoserine (L-Hse), the third step in the biosynthesis of threonine and methionine from aspartate. Utilizes NADPH but not NADH as coenzyme. The chain is Homoserine dehydrogenase (hom) from Bacillus subtilis (strain 168).